The primary structure comprises 304 residues: Protease HtpX homolog (304 aa).

2 consecutive transmembrane segments (helical) span residues 19-39 (FIVF…VSYF) and 41-61 (LGEI…YYAY). Position 146 (His-146) interacts with Zn(2+). Glu-147 is an active-site residue. His-150 provides a ligand contact to Zn(2+). 2 helical membrane passes run 156 to 176 (VRLQ…GDGL) and 192 to 212 (NILG…ATLL). Position 221 (Glu-221) interacts with Zn(2+).

Belongs to the peptidase M48B family. Requires Zn(2+) as cofactor.

It localises to the cell inner membrane. The protein is Protease HtpX homolog of Dictyoglomus turgidum (strain DSM 6724 / Z-1310).